The primary structure comprises 233 residues: Cell number regulator 8 (233 aa).

2 consecutive transmembrane segments (helical) span residues 85-101 (VCLL…GSNV) and 115-138 (CLPY…APWF).

The protein belongs to the cornifelin family. As to expression, expressed in roots, coleoptiles, leaves, stalks, apical meristems, immature ears, embryos, endosperm, pericarp, silks, tassel spikelets and pollen. Highest expression in the pericarp and stalks.

Its subcellular location is the membrane. This is Cell number regulator 8 (CNR8) from Zea mays (Maize).